The following is a 480-amino-acid chain: MNFETVIGLEVHVELNTNSKIFSPSSAHFGQEQNANTNVIDWSFPGVLPVMNKGVIDAGIKAALALNMDIHQNMHFDRKNYFYPDNPKAYQISQFDEPIGYNGWIEIELEDGTRKKIRIERAHLEEDAGKNTHGTDGYSYVDLNRQGVPLIEIVSEADMRSPEEAYAYLTALKEIIQYTGISDVKMEEGSMRVDANISLRPYGQEEFGTKAELKNLNSFNNVRKGLIHEEKRQAQVLRSGGQIQQETRRFDETTGETILMRVKEGSSDYRYFPEPDLPLFDISDEWIDQVRLELPEFPQERRAKYVSSFGLSSYDASQLTATKATSDFFEKAVAIGGDAKQVSNWLQGEVAQFLNSESKSIEEIGLTPENLVEMIGLIADGTISSKIAKKVFVHLAKNGGSAEEFVKKAGLVQISDPEVLIPIIHQVFADNEAAVIDFKSGKRNADKAFTGYLMKATKGQANPQVALKLLAQELAKLKEE.

The protein belongs to the GatB/GatE family. GatB subfamily. As to quaternary structure, heterotrimer of A, B and C subunits.

The catalysed reaction is L-glutamyl-tRNA(Gln) + L-glutamine + ATP + H2O = L-glutaminyl-tRNA(Gln) + L-glutamate + ADP + phosphate + H(+). It catalyses the reaction L-aspartyl-tRNA(Asn) + L-glutamine + ATP + H2O = L-asparaginyl-tRNA(Asn) + L-glutamate + ADP + phosphate + 2 H(+). Functionally, allows the formation of correctly charged Asn-tRNA(Asn) or Gln-tRNA(Gln) through the transamidation of misacylated Asp-tRNA(Asn) or Glu-tRNA(Gln) in organisms which lack either or both of asparaginyl-tRNA or glutaminyl-tRNA synthetases. The reaction takes place in the presence of glutamine and ATP through an activated phospho-Asp-tRNA(Asn) or phospho-Glu-tRNA(Gln). This Streptococcus agalactiae serotype Ia (strain ATCC 27591 / A909 / CDC SS700) protein is Aspartyl/glutamyl-tRNA(Asn/Gln) amidotransferase subunit B.